We begin with the raw amino-acid sequence, 338 residues long: Glycerol-3-phosphate dehydrogenase [NAD(P)+] (338 aa).

Positions 13, 14, and 108 each coordinate NADPH. Residues K108, G139, and S141 each coordinate sn-glycerol 3-phosphate. Residue A143 participates in NADPH binding. Sn-glycerol 3-phosphate is bound by residues K194, D247, S257, R258, and N259. The active-site Proton acceptor is K194. An NADPH-binding site is contributed by R258. 2 residues coordinate NADPH: V282 and E284.

It belongs to the NAD-dependent glycerol-3-phosphate dehydrogenase family.

It localises to the cytoplasm. It catalyses the reaction sn-glycerol 3-phosphate + NAD(+) = dihydroxyacetone phosphate + NADH + H(+). The catalysed reaction is sn-glycerol 3-phosphate + NADP(+) = dihydroxyacetone phosphate + NADPH + H(+). Its pathway is membrane lipid metabolism; glycerophospholipid metabolism. Its function is as follows. Catalyzes the reduction of the glycolytic intermediate dihydroxyacetone phosphate (DHAP) to sn-glycerol 3-phosphate (G3P), the key precursor for phospholipid synthesis. The sequence is that of Glycerol-3-phosphate dehydrogenase [NAD(P)+] from Streptococcus pneumoniae (strain JJA).